The following is a 145-amino-acid chain: Histone H2B.7 (145 aa).

Basic and acidic residues predominate over residues 1–30 (MAPKAEKKPAEKKPVEEKSKAEKAPAEKKP). The interval 1–53 (MAPKAEKKPAEKKPVEEKSKAEKAPAEKKPKAGKKLPKEAGAGGDKKKKMKKK) is disordered. A2 bears the N,N,N-trimethylalanine; alternate mark. A2 is subject to N,N-dimethylalanine; alternate. The residue at position 2 (A2) is an N-methylalanine; alternate. N6-methyllysine; partial is present on K4. Residues K7 and K12 each carry the N6-acetyllysine modification. An N6,N6-dimethyllysine modification is found at K13. 3 positions are modified to N6-acetyllysine: K23, K28, and K34. N6-acetyllysine; partial is present on K35. K141 participates in a covalent cross-link: Glycyl lysine isopeptide (Lys-Gly) (interchain with G-Cter in ubiquitin).

The protein belongs to the histone H2B family. The nucleosome is a histone octamer containing two molecules each of H2A, H2B, H3 and H4 assembled in one H3-H4 heterotetramer and two H2A-H2B heterodimers. The octamer wraps approximately 147 bp of DNA. In terms of processing, can be acetylated to form H2BK6ac, H2BK11ac, H2BK22ac, H2BK27ac H2BK33ac and H2BK34ac. Post-translationally, mono-, di- or trimethylated at the N-terminus to form H2BA1me1/2/3. H2BA1me2 and H2BA1me3 may be methylated and/or acetylated to form H2BA1me2K3me1, H2BA1me2K3me1K6ac, H2BA1me2K6ac H2BA1me3K6ac, H2BA1me3K6acK11ac and H2BA1me2K3me1K6acK11ac. Monoubiquitinated by BRE1 to form H2BK143ub1 and deubiquitinated by UBP26. Required for heterochromatic histone H3 di- and trimethylation at H3K4me. May give a specific tag for epigenetic transcriptional activation.

Its subcellular location is the nucleus. The protein resides in the chromosome. In terms of biological role, core component of nucleosome. Nucleosomes wrap and compact DNA into chromatin, limiting DNA accessibility to the cellular machineries which require DNA as a template. Histones thereby play a central role in transcription regulation, DNA repair, DNA replication and chromosomal stability. DNA accessibility is regulated via a complex set of post-translational modifications of histones, also called histone code, and nucleosome remodeling. In Arabidopsis thaliana (Mouse-ear cress), this protein is Histone H2B.7.